Consider the following 311-residue polypeptide: tRNA dimethylallyltransferase (311 aa).

Residue 11-18 (GPTASGKS) coordinates ATP. Residue 13–18 (TASGKS) coordinates substrate. Interaction with substrate tRNA stretches follow at residues 36–39 (DSMQ) and 160–164 (QRLIR).

It belongs to the IPP transferase family. As to quaternary structure, monomer. Mg(2+) serves as cofactor.

The enzyme catalyses adenosine(37) in tRNA + dimethylallyl diphosphate = N(6)-dimethylallyladenosine(37) in tRNA + diphosphate. Catalyzes the transfer of a dimethylallyl group onto the adenine at position 37 in tRNAs that read codons beginning with uridine, leading to the formation of N6-(dimethylallyl)adenosine (i(6)A). In Rickettsia typhi (strain ATCC VR-144 / Wilmington), this protein is tRNA dimethylallyltransferase.